The primary structure comprises 79 residues: Small ribosomal subunit protein bS18 (79 aa).

It belongs to the bacterial ribosomal protein bS18 family. As to quaternary structure, part of the 30S ribosomal subunit. Forms a tight heterodimer with protein bS6.

In terms of biological role, binds as a heterodimer with protein bS6 to the central domain of the 16S rRNA, where it helps stabilize the platform of the 30S subunit. The chain is Small ribosomal subunit protein bS18 from Nitrobacter winogradskyi (strain ATCC 25391 / DSM 10237 / CIP 104748 / NCIMB 11846 / Nb-255).